Reading from the N-terminus, the 194-residue chain is Peptidyl-tRNA hydrolase (194 aa).

Histidine 17 contacts tRNA. Histidine 22 serves as the catalytic Proton acceptor. The tRNA site is built by phenylalanine 68, asparagine 70, and asparagine 116.

This sequence belongs to the PTH family. As to quaternary structure, monomer.

The protein localises to the cytoplasm. It catalyses the reaction an N-acyl-L-alpha-aminoacyl-tRNA + H2O = an N-acyl-L-amino acid + a tRNA + H(+). Functionally, hydrolyzes ribosome-free peptidyl-tRNAs (with 1 or more amino acids incorporated), which drop off the ribosome during protein synthesis, or as a result of ribosome stalling. Its function is as follows. Catalyzes the release of premature peptidyl moieties from peptidyl-tRNA molecules trapped in stalled 50S ribosomal subunits, and thus maintains levels of free tRNAs and 50S ribosomes. In Xanthomonas oryzae pv. oryzae (strain MAFF 311018), this protein is Peptidyl-tRNA hydrolase.